A 258-amino-acid polypeptide reads, in one-letter code: UPF0246 protein YaaA (258 aa).

Belongs to the UPF0246 family.

This chain is UPF0246 protein YaaA, found in Escherichia coli O157:H7 (strain EC4115 / EHEC).